The following is a 518-amino-acid chain: MIPDVSQALTWLERHPQALKGIQRGLERETLRVNADGTLATTGHPDALGSALTHKWVTTDFAEALLEFITPVDGDIQHMLTLMRDLHRYTARNLGDERMWPLSMPCYIAEGQDIELAQYGTSNIGRLKTLYREGLKNRYGALMQTISGVHYNFSLPMAFWQAKCGVVDGEDAKEKISAGYFRLIRNYYRFGWVIPYLFGASPAICSSFLQGKPTTLPFEKTDCGMYYLPYATSLRLSDLGYTNKSQSNLGITFNDLHEYVAGLKRAIKTPSTEYAEIGLEKDGKRLQINSNVLQIENELYAPIRPKRVTRSGETPSDALLRGGIEYIEVRSLDINPFSPIGVDEQQVRFLDLFMVWCVLADAPEMSSDELLCTRTNWNRVILEGRKPGLTLGIGCETAQFPLPKVGKDLFRDLKRVAQTLDSIHGGEDYQKVCDELVACFDNPELTFSARILRSMIDTGIGGTGKALGEAYRNLLREEPLEILREEDFIAEREASTRRQLEVEAADTEPFDAWLEKHA.

It belongs to the glutamate--cysteine ligase type 1 family. Type 1 subfamily.

It carries out the reaction L-cysteine + L-glutamate + ATP = gamma-L-glutamyl-L-cysteine + ADP + phosphate + H(+). Its pathway is sulfur metabolism; glutathione biosynthesis; glutathione from L-cysteine and L-glutamate: step 1/2. This Citrobacter koseri (strain ATCC BAA-895 / CDC 4225-83 / SGSC4696) protein is Glutamate--cysteine ligase.